The chain runs to 396 residues: Probable sugar efflux transporter (396 aa).

The next 12 helical transmembrane spans lie at valine 15–leucine 35, valine 50–leucine 70, leucine 81–phenylalanine 101, valine 103–alanine 123, alanine 136–isoleucine 156, threonine 169–proline 189, proline 209–tyrosine 229, phenylalanine 246–glycine 266, serine 275–alanine 295, leucine 301–valine 321, valine 333–glycine 353, and alanine 364–phenylalanine 384.

Belongs to the major facilitator superfamily. SotB (TC 2.A.1.2) family.

The protein resides in the cell inner membrane. Involved in the efflux of sugars. The physiological role may be the reduction of the intracellular concentration of toxic sugars or sugar metabolites. The polypeptide is Probable sugar efflux transporter (Salmonella agona (strain SL483)).